Reading from the N-terminus, the 96-residue chain is Putative pterin-4-alpha-carbinolamine dehydratase (96 aa).

This sequence belongs to the pterin-4-alpha-carbinolamine dehydratase family.

The enzyme catalyses (4aS,6R)-4a-hydroxy-L-erythro-5,6,7,8-tetrahydrobiopterin = (6R)-L-erythro-6,7-dihydrobiopterin + H2O. The polypeptide is Putative pterin-4-alpha-carbinolamine dehydratase (Brucella anthropi (strain ATCC 49188 / DSM 6882 / CCUG 24695 / JCM 21032 / LMG 3331 / NBRC 15819 / NCTC 12168 / Alc 37) (Ochrobactrum anthropi)).